Consider the following 776-residue polypeptide: DNA topoisomerase 1 (776 aa).

The 111-residue stretch at 1–111 (MKLVIVESPA…VKSDDFFKRV (111 aa)) folds into the Toprim domain. Positions 7 and 80 each coordinate Mg(2+). The region spanning 132–568 (DANLVNAQQA…FWSGFNHNIE (437 aa)) is the Topo IA-type catalytic domain. Residues 166–171 (SAGRVQ) form an interaction with DNA region. Tyr-304 (O-(5'-phospho-DNA)-tyrosine intermediate) is an active-site residue. The C4-type zinc finger occupies 600-627 (CPSCKTGELSLKLGKFGAFLACSNYPEC).

Belongs to the type IA topoisomerase family. Monomer. Mg(2+) serves as cofactor.

It catalyses the reaction ATP-independent breakage of single-stranded DNA, followed by passage and rejoining.. Functionally, releases the supercoiling and torsional tension of DNA, which is introduced during the DNA replication and transcription, by transiently cleaving and rejoining one strand of the DNA duplex. Introduces a single-strand break via transesterification at a target site in duplex DNA. The scissile phosphodiester is attacked by the catalytic tyrosine of the enzyme, resulting in the formation of a DNA-(5'-phosphotyrosyl)-enzyme intermediate and the expulsion of a 3'-OH DNA strand. The free DNA strand then undergoes passage around the unbroken strand, thus removing DNA supercoils. Finally, in the religation step, the DNA 3'-OH attacks the covalent intermediate to expel the active-site tyrosine and restore the DNA phosphodiester backbone. This chain is DNA topoisomerase 1, found in Rickettsia felis (strain ATCC VR-1525 / URRWXCal2) (Rickettsia azadi).